A 283-amino-acid polypeptide reads, in one-letter code: MTNMGAIRAALYRRRWLLSRRVVQMFIVLAFLVDWPEVGRIAHGNLSSSLWLGVLPLTDPFIALQSLFSGTMLAKTALVGTVIVAGFYFLFGGRIYCSWVCPINMVTDLAYWLRQKLNLKGNMTMSRELRMAVLGMSLILTVLSGTLAWENFNPITLFQRELMWTSVAGSMVLLSLFLFDLLITRRGWCGHLCPVGAFYAVLGRYGRLRVTAEQSGSCAGCGSCIRVCPEPHVLAPVVSLKANTVTHGDCTRCGACLDQCATGALAMKLDLGKSFRGIPIVRK.

4Fe-4S ferredoxin-type domains lie at 208–239 and 241–270; these read LRVT…PVVS and KANT…MKLD. C218, C221, C224, C228, C250, C253, C256, and C260 together coordinate [4Fe-4S] cluster.

Its pathway is one-carbon metabolism; methylamine degradation. Its function is as follows. Involved in electron transfer. In Methylobacillus flagellatus (strain ATCC 51484 / DSM 6875 / VKM B-1610 / KT), this protein is Methylamine utilization ferredoxin-type protein MauN (mauN).